A 278-amino-acid polypeptide reads, in one-letter code: Large ribosomal subunit protein uL2 (278 aa).

The interval 218–278 (RPHNRGVVMN…IMRSRHQRKK (61 aa)) is disordered.

The protein belongs to the universal ribosomal protein uL2 family. As to quaternary structure, part of the 50S ribosomal subunit. Forms a bridge to the 30S subunit in the 70S ribosome.

Functionally, one of the primary rRNA binding proteins. Required for association of the 30S and 50S subunits to form the 70S ribosome, for tRNA binding and peptide bond formation. It has been suggested to have peptidyltransferase activity; this is somewhat controversial. Makes several contacts with the 16S rRNA in the 70S ribosome. This is Large ribosomal subunit protein uL2 from Rhizobium etli (strain ATCC 51251 / DSM 11541 / JCM 21823 / NBRC 15573 / CFN 42).